A 255-amino-acid polypeptide reads, in one-letter code: ParA family protein CPn_0805/CP_1066/CPj0805/CpB0834 (255 aa).

The protein belongs to the ParA family.

The sequence is that of ParA family protein CPn_0805/CP_1066/CPj0805/CpB0834 from Chlamydia pneumoniae (Chlamydophila pneumoniae).